A 305-amino-acid polypeptide reads, in one-letter code: Virulence plasmid integrase pGP7-D (305 aa).

In terms of domain architecture, Core-binding (CB) spans 13–99; the sequence is LTFGEASEIW…CYISFTKFLY (87 aa). In terms of domain architecture, Tyr recombinase spans 127–303; that stretch reads VKTVSISKKE…GNSSVANIPT (177 aa). Residues Lys188 and Arg257 contribute to the active site. Tyr289 acts as the O-(3'-phospho-DNA)-tyrosine intermediate in catalysis.

Belongs to the 'phage' integrase family.

The sequence is that of Virulence plasmid integrase pGP7-D from Chlamydia muridarum (strain MoPn / Nigg).